Consider the following 209-residue polypeptide: Large ribosomal subunit protein uL4 (209 aa).

This sequence belongs to the universal ribosomal protein uL4 family. Part of the 50S ribosomal subunit.

Its function is as follows. One of the primary rRNA binding proteins, this protein initially binds near the 5'-end of the 23S rRNA. It is important during the early stages of 50S assembly. It makes multiple contacts with different domains of the 23S rRNA in the assembled 50S subunit and ribosome. In terms of biological role, forms part of the polypeptide exit tunnel. In Borrelia duttonii (strain Ly), this protein is Large ribosomal subunit protein uL4.